The following is a 254-amino-acid chain: Dihydroanticapsin 7-dehydrogenase (254 aa).

Residue 9-31 coordinates NAD(+); that stretch reads LITGGASGIGYAAVQAFLNQQAN. Residue serine 139 participates in substrate binding. The active-site Proton acceptor is the tyrosine 152.

The protein belongs to the short-chain dehydrogenases/reductases (SDR) family.

It carries out the reaction L-dihydroanticapsin + NAD(+) = L-anticapsin + NADH + H(+). It functions in the pathway antibiotic biosynthesis; bacilysin biosynthesis. Functionally, part of the bacABCDEFG operon responsible for the biosynthesis of bacilysin, an irreversible inactivator of the glutaminase domain of glucosamine synthetase. Catalyzes the dehydrogenation of the C7-hydroxyl group in the 4S-tetrahydrotyrosine (4S-H4Tyr) to yield anticapsin (epoxycyclohexanonyl-Ala). This chain is Dihydroanticapsin 7-dehydrogenase, found in Bacillus amyloliquefaciens (Bacillus velezensis).